An 875-amino-acid chain; its full sequence is MTLARFVLALVLGALPEVVGFDSVLNDSLHHRHRHSPPPGPQYPYYLPTHQRPPRTRPPPPLPRFSRPPRALLAQRPHALQAGHTPRRHPWGCPPGEPWVSVTDFGAPCLRWAEVPPFLERSPPASWAQLRGQRHNFCRSPDGPGRPWCFYGDARGKVDWGYCDCRHGSVRLRGGKNEFEGTVEVYASGVWGTVCSSHWDDSDASVICHQLQLGGKGIAKQTPFSGLGLIPIYWSNVRCRGDEENILLCEKDIWQXGVCPQKMAAAVTCSFSHGPAFPIIRLVGGNSVHEGRVELYHAGQWGTVCDDQWDDADAEVICRQLGLSGIAKAWHQAYFGEGSGPVMLDEVRCTGNELSIEQCPKSSWGEHNCGHKEDAGVSCTPLTDGVIRLAGGKGSHEGRLEVYYRGQWGTVCDDGWTELNTYVACRQLGFKYGKQASANHFEESTGPIWLDDVSCSGKETRFLQCSRRQWGRHDCSHREDVSIACYPGSEGHRLSLGFPVRLMDGENKKEGRVEVFINGQWGTICDDGWTDKDAAVICRQLGYKGPARARTMAYFGEGKGPIHVDNVKCTGNERSLADCIKQDIGRHNCRHSEDAGVICDYFGKKASGNSNKESLSSVCGLRLLHRRQKRIIGGKNSLRGGWPWQVSLRLKSSHGDGRLLCGATLLSSCWVLTAAHCFKRYGNSTRNYAVRVGDYHTLVPEEFEEEIGVQQIVIHREYRPDSSDYDIALVRLQGPEEQCARFSSHVLPACLPFWRERPQKTASNCYITGWGDTGRAYSRTLQQAAIPLLPKRFCEERYKGRFTGRMLCAGNLHEHKRVDSCQGDSGGPLMCERPGESWAVYGVTSWGYGCGVKDSPGVYTKVSAFVPWIKSVTKL.

The N-terminal stretch at 1–20 (MTLARFVLALVLGALPEVVG) is a signal peptide. A glycan (N-linked (GlcNAc...) asparagine) is linked at asparagine 26. Residues 29-68 (LHHRHRHSPPPGPQYPYYLPTHQRPPRTRPPPPLPRFSRP) are disordered. A Kringle domain is found at 93 to 165 (CPPGEPWVSV…GKVDWGYCDC (73 aa)). 20 cysteine pairs are disulfide-bonded: cysteine 93–cysteine 165, cysteine 109–cysteine 149, cysteine 138–cysteine 163, cysteine 195–cysteine 259, cysteine 208–cysteine 269, cysteine 239–cysteine 249, cysteine 305–cysteine 369, cysteine 318–cysteine 379, cysteine 349–cysteine 359, cysteine 412–cysteine 475, cysteine 425–cysteine 485, cysteine 455–cysteine 465, cysteine 525–cysteine 589, cysteine 538–cysteine 599, cysteine 569–cysteine 579, cysteine 619–cysteine 750, cysteine 661–cysteine 677, cysteine 765–cysteine 831, cysteine 794–cysteine 808, and cysteine 821–cysteine 850. SRCR domains lie at 170-271 (VRLR…TCSF), 280-381 (IRLV…SCTP), 387-487 (IRLA…ACYP), and 500-601 (VRLM…ICDY). Residues 619–630 (CGLRLLHRRQKR) are zymogen activation region. Residues 631-874 (IIGGKNSLRG…FVPWIKSVTK (244 aa)) form the Peptidase S1 domain. The Charge relay system role is filled by histidine 676. Asparagine 683 carries an N-linked (GlcNAc...) asparagine glycan. Aspartate 726 serves as the catalytic Charge relay system. Serine 825 functions as the Charge relay system in the catalytic mechanism.

The protein belongs to the peptidase S1 family.

The protein resides in the secreted. Functionally, plays a role in neuronal plasticity and the proteolytic action may subserve structural reorganizations associated with learning and memory operations. The polypeptide is Neurotrypsin (PRSS12) (Trachypithecus phayrei (Phayre's leaf monkey)).